We begin with the raw amino-acid sequence, 719 residues long: Probable disease resistance protein At4g14610 (719 aa).

Residues 25-73 (SLPENLAALQKAIEVLKTKHDDVKRRVDKEEFLGRRHRLSQVQVEIERL) are a coiled coil. In terms of domain architecture, NB-ARC spans 114–418 (EENLVAQVEE…NELEKILGCP (305 aa)). Position 156–163 (156–163 (GMGGVGKT)) interacts with ATP. LRR repeat units lie at residues 400–421 (AVRR…PTCP), 422–444 (QLTT…FFRF), and 447–469 (NLVV…ISEV).

This sequence belongs to the disease resistance NB-LRR family.

Probable disease resistance protein. The polypeptide is Probable disease resistance protein At4g14610 (Arabidopsis thaliana (Mouse-ear cress)).